The following is a 2410-amino-acid chain: Cell wall alpha-1,3-glucan synthase ags1 (2410 aa).

Phosphoserine is present on residues Ser-1643, Ser-1644, and Ser-1651. Thr-1653 carries the phosphothreonine modification. The disordered stretch occupies residues 1685 to 1706; sequence SLSLGSRRGPGHTTEDDASDGL. A phosphoserine mark is found at Ser-1738 and Ser-1812. The interval 1796–1827 is disordered; sequence QDDLSDPARSVDSDSVSPPLPPFVAGSNPNAR. Residues 1802-1827 show a composition bias toward low complexity; sequence PARSVDSDSVSPPLPPFVAGSNPNAR.

Belongs to the glycosyltransferase group 1 family. In terms of assembly, interacts with sad1.

The catalysed reaction is [(1-&gt;3)-alpha-D-glucosyl](n) + UDP-alpha-D-glucose = [(1-&gt;3)-alpha-D-glucosyl](n+1) + UDP + H(+). Functionally, required for alpha-1,3-glucan and alpha-1,4-glucan production which are required for cell wall synthesis. The polypeptide is Cell wall alpha-1,3-glucan synthase ags1 (ags1) (Schizosaccharomyces pombe (strain 972 / ATCC 24843) (Fission yeast)).